Here is a 671-residue protein sequence, read N- to C-terminus: Putative glycoside hydrolase BT_3595 (671 aa).

The signal sequence occupies residues Met-1–Ala-24.

Belongs to the glycoside hydrolase-like 3 (GHL3) family.

The chain is Putative glycoside hydrolase BT_3595 from Bacteroides thetaiotaomicron (strain ATCC 29148 / DSM 2079 / JCM 5827 / CCUG 10774 / NCTC 10582 / VPI-5482 / E50).